The sequence spans 158 residues: Transcription elongation factor GreA (158 aa).

The stretch at 53 to 73 (EQQGMVEARIRDIEAKLSNAQ) forms a coiled coil.

The protein belongs to the GreA/GreB family.

Its function is as follows. Necessary for efficient RNA polymerase transcription elongation past template-encoded arresting sites. The arresting sites in DNA have the property of trapping a certain fraction of elongating RNA polymerases that pass through, resulting in locked ternary complexes. Cleavage of the nascent transcript by cleavage factors such as GreA or GreB allows the resumption of elongation from the new 3'terminus. GreA releases sequences of 2 to 3 nucleotides. This Pseudomonas aeruginosa (strain ATCC 15692 / DSM 22644 / CIP 104116 / JCM 14847 / LMG 12228 / 1C / PRS 101 / PAO1) protein is Transcription elongation factor GreA.